The primary structure comprises 128 residues: Small ribosomal subunit protein eS8 (128 aa).

The protein belongs to the eukaryotic ribosomal protein eS8 family. Part of the 30S ribosomal subunit.

The protein is Small ribosomal subunit protein eS8 of Methanococcus maripaludis (strain DSM 14266 / JCM 13030 / NBRC 101832 / S2 / LL).